A 342-amino-acid chain; its full sequence is D-erythrose-4-phosphate dehydrogenase (342 aa).

12 to 13 (RI) contacts NAD(+). Substrate-binding positions include 154–156 (SCT), arginine 200, 213–214 (TK), and arginine 236. Residue cysteine 155 is the Nucleophile of the active site. Asparagine 318 contacts NAD(+).

Belongs to the glyceraldehyde-3-phosphate dehydrogenase family. Epd subfamily. In terms of assembly, homotetramer.

The protein localises to the cytoplasm. It catalyses the reaction D-erythrose 4-phosphate + NAD(+) + H2O = 4-phospho-D-erythronate + NADH + 2 H(+). It functions in the pathway cofactor biosynthesis; pyridoxine 5'-phosphate biosynthesis; pyridoxine 5'-phosphate from D-erythrose 4-phosphate: step 1/5. Catalyzes the NAD-dependent conversion of D-erythrose 4-phosphate to 4-phosphoerythronate. This is D-erythrose-4-phosphate dehydrogenase from Salmonella arizonae (strain ATCC BAA-731 / CDC346-86 / RSK2980).